Here is a 429-residue protein sequence, read N- to C-terminus: Enolase (429 aa).

Position 167 (Gln-167) interacts with (2R)-2-phosphoglycerate. Catalysis depends on Glu-209, which acts as the Proton donor. Mg(2+) is bound by residues Asp-246, Glu-289, and Asp-316. Residues Lys-341, Arg-370, Ser-371, and Lys-392 each contribute to the (2R)-2-phosphoglycerate site. Lys-341 serves as the catalytic Proton acceptor.

The protein belongs to the enolase family. As to quaternary structure, component of the RNA degradosome, a multiprotein complex involved in RNA processing and mRNA degradation. Requires Mg(2+) as cofactor.

It localises to the cytoplasm. The protein resides in the secreted. Its subcellular location is the cell surface. The enzyme catalyses (2R)-2-phosphoglycerate = phosphoenolpyruvate + H2O. It functions in the pathway carbohydrate degradation; glycolysis; pyruvate from D-glyceraldehyde 3-phosphate: step 4/5. Catalyzes the reversible conversion of 2-phosphoglycerate (2-PG) into phosphoenolpyruvate (PEP). It is essential for the degradation of carbohydrates via glycolysis. The chain is Enolase from Pseudomonas fluorescens (strain ATCC BAA-477 / NRRL B-23932 / Pf-5).